A 422-amino-acid polypeptide reads, in one-letter code: 4-hydroxy-3-methylbut-2-en-1-yl diphosphate synthase (flavodoxin) (422 aa).

[4Fe-4S] cluster is bound by residues cysteine 316, cysteine 319, cysteine 362, and glutamate 369.

This sequence belongs to the IspG family. The cofactor is [4Fe-4S] cluster.

The catalysed reaction is (2E)-4-hydroxy-3-methylbut-2-enyl diphosphate + oxidized [flavodoxin] + H2O + 2 H(+) = 2-C-methyl-D-erythritol 2,4-cyclic diphosphate + reduced [flavodoxin]. It participates in isoprenoid biosynthesis; isopentenyl diphosphate biosynthesis via DXP pathway; isopentenyl diphosphate from 1-deoxy-D-xylulose 5-phosphate: step 5/6. Converts 2C-methyl-D-erythritol 2,4-cyclodiphosphate (ME-2,4cPP) into 1-hydroxy-2-methyl-2-(E)-butenyl 4-diphosphate. The chain is 4-hydroxy-3-methylbut-2-en-1-yl diphosphate synthase (flavodoxin) from Ehrlichia canis (strain Jake).